The primary structure comprises 507 residues: MTRLVWFCMQVAYCLHGWDWDIMDRGRSSNSYDSLWGGKARDNPIVSQLPLQYRIRSALTQEQQTAYQVMYRIQEITIKLRTNDLNPPTSRYRSLSPPPVYDSQGKRTNTREHRYRKKLEEERHRLVEIALKMIPHFIAPDDYRRPSKFQDKYYIPINDYPEINFVGLLLGPRGNTLKQLQQQSGCKIVIRGRGSVKEGKAATDLPKGAMNMNEPLHCVISADTEEKIPLGINAVESIIIKAITSPEGQNDLKRGQLRELAVLNGTLREDNRPCPLCGEQGHKKWECSSNPSLSMTVICQRCNQPGHAARDCTSPLNEFGKRTSDGPEFRETKKLQQDAPPPSGPVGSHPSAPGSGSANSGVAPASLHPPGTMAPPGALPPPGSLAAPGTLPPPAALPAPAAPGTLPPPVALPAPATLPQAGVPPAPDASPAVKTAVPIEGPPAPPQTAPPLRQTAATASSAGSSQSAQEEPENARNGVEKAAPGPPAAVLPPPPPPPPPPPPPPSS.

Over residues 84-93 (DLNPPTSRYR) the composition is skewed to polar residues. Positions 84–110 (DLNPPTSRYRSLSPPPVYDSQGKRTNT) are disordered. The 67-residue stretch at 154–220 (YIPINDYPEI…NMNEPLHCVI (67 aa)) folds into the KH domain. CCHC-type zinc fingers lie at residues 272–289 (RPCPLCGEQGHKKWECSS) and 297–314 (VICQRCNQPGHAARDCTS). The disordered stretch occupies residues 307–507 (HAARDCTSPL…PPPPPPPPSS (201 aa)). Residues 319-336 (FGKRTSDGPEFRETKKLQ) are compositionally biased toward basic and acidic residues. Positions 345-376 (PVGSHPSAPGSGSANSGVAPASLHPPGTMAPP) are enriched in low complexity. Composition is skewed to pro residues over residues 390-412 (TLPPPAALPAPAAPGTLPPPVAL) and 440-449 (EGPPAPPQTA). The segment covering 450–469 (PPLRQTAATASSAGSSQSAQ) has biased composition (low complexity). Residues 484–507 (PGPPAAVLPPPPPPPPPPPPPPSS) are compositionally biased toward pro residues.

The protein belongs to the BBP/SF1 family.

The protein localises to the nucleus. In terms of biological role, necessary for the splicing of pre-mRNA. Has a role in the recognition of the branch site (5'-UACUAAC-3'), the pyrimidine tract and the 3'-splice site at the 3'-end of introns. This Eremothecium gossypii (strain ATCC 10895 / CBS 109.51 / FGSC 9923 / NRRL Y-1056) (Yeast) protein is Branchpoint-bridging protein (BBP).